Here is a 285-residue protein sequence, read N- to C-terminus: GPN-loop GTPase 3 (285 aa).

13-18 contacts GTP; that stretch reads GSGKST. The Gly-Pro-Asn (GPN)-loop; involved in dimer interface motif lies at 72–74; the sequence is GPN. 174–177 is a GTP binding site; sequence TKMD. The interval 261–285 is disordered; that stretch reads KEPKENEEDKSENFDEFFQDRADEP. A compositionally biased stretch (acidic residues) spans 265–277; sequence ENEEDKSENFDEF.

The protein belongs to the GPN-loop GTPase family. In terms of assembly, heterodimer with gpn1. Binds to RNA polymerase II (RNAPII).

Functionally, small GTPase required for proper localization of RNA polymerase II (RNAPII). May act at an RNAP assembly step prior to nuclear import. The protein is GPN-loop GTPase 3 of Xenopus tropicalis (Western clawed frog).